We begin with the raw amino-acid sequence, 226 residues long: 7-cyano-7-deazaguanine synthase (226 aa).

ATP is bound at residue 8 to 18; the sequence is LSGGLDSTTTL. Residues Cys-188, Cys-198, Cys-201, and Cys-204 each coordinate Zn(2+).

This sequence belongs to the QueC family. Zn(2+) is required as a cofactor.

It carries out the reaction 7-carboxy-7-deazaguanine + NH4(+) + ATP = 7-cyano-7-deazaguanine + ADP + phosphate + H2O + H(+). It participates in purine metabolism; 7-cyano-7-deazaguanine biosynthesis. Its function is as follows. Catalyzes the ATP-dependent conversion of 7-carboxy-7-deazaguanine (CDG) to 7-cyano-7-deazaguanine (preQ(0)). The polypeptide is 7-cyano-7-deazaguanine synthase (Nitrosomonas eutropha (strain DSM 101675 / C91 / Nm57)).